The primary structure comprises 257 residues: Pimeloyl-[acyl-carrier protein] methyl ester esterase (257 aa).

Residues 16 to 242 (LVLLHGWGLN…AAHAPFISHP (227 aa)) form the AB hydrolase-1 domain. Residues W22, 82–83 (SL), and 143–147 (FLGLQ) each bind substrate. Catalysis depends on S82, which acts as the Nucleophile. Residues D207 and H235 contribute to the active site. Substrate is bound at residue H235.

This sequence belongs to the AB hydrolase superfamily. Carboxylesterase BioH family. Monomer.

Its subcellular location is the cytoplasm. The enzyme catalyses 6-carboxyhexanoyl-[ACP] methyl ester + H2O = 6-carboxyhexanoyl-[ACP] + methanol + H(+). Its pathway is cofactor biosynthesis; biotin biosynthesis. In terms of biological role, the physiological role of BioH is to remove the methyl group introduced by BioC when the pimeloyl moiety is complete. It allows to synthesize pimeloyl-ACP via the fatty acid synthetic pathway through the hydrolysis of the ester bonds of pimeloyl-ACP esters. The polypeptide is Pimeloyl-[acyl-carrier protein] methyl ester esterase (Sodalis glossinidius (strain morsitans)).